Consider the following 414-residue polypeptide: Mini-circle putative transposase for IS117 (414 aa).

This Streptomyces coelicolor (strain ATCC BAA-471 / A3(2) / M145) protein is Mini-circle putative transposase for IS117.